Consider the following 238-residue polypeptide: MNHKLPQHIAVVMDGNGRWAESRGLPRVEGHKAGLDSVKKIINCCLEKKISCLSLFAFSSENWSRPVTEVNFLMELFLEALRKEIDDLNQHGIRLKFTGDREPLSQVLQKQMYDAEALTRNNQQLILNVVVNYGGKWDIVTAAKKLIHSVLDGKLACDEINEAVFAQFLDTSGMPEPDLFIRTSGELRISNFFLWQLAYTELYFTDVHWPDFNEHEFELALTSFARRARRFGQISQSE.

Aspartate 14 is an active-site residue. Mg(2+) is bound at residue aspartate 14. Residues 15–18 (GNGR), tryptophan 19, arginine 27, histidine 31, and 59–61 (SSE) contribute to the substrate site. Residue asparagine 62 is the Proton acceptor of the active site. Substrate is bound by residues tryptophan 63, arginine 65, arginine 182, and 188–190 (RIS). Mg(2+) is bound at residue glutamate 201.

Belongs to the UPP synthase family. Homodimer. Requires Mg(2+) as cofactor.

The catalysed reaction is 8 isopentenyl diphosphate + (2E,6E)-farnesyl diphosphate = di-trans,octa-cis-undecaprenyl diphosphate + 8 diphosphate. Functionally, catalyzes the sequential condensation of isopentenyl diphosphate (IPP) with (2E,6E)-farnesyl diphosphate (E,E-FPP) to yield (2Z,6Z,10Z,14Z,18Z,22Z,26Z,30Z,34E,38E)-undecaprenyl diphosphate (di-trans,octa-cis-UPP). UPP is the precursor of glycosyl carrier lipid in the biosynthesis of bacterial cell wall polysaccharide components such as peptidoglycan and lipopolysaccharide. The protein is Ditrans,polycis-undecaprenyl-diphosphate synthase ((2E,6E)-farnesyl-diphosphate specific) of Legionella pneumophila (strain Paris).